The chain runs to 559 residues: 5'-AMP-activated protein kinase catalytic subunit alpha-1 (559 aa).

The Protein kinase domain occupies 27 to 279; sequence YILGDTLGVG…IKDIREHEWF (253 aa). The residue at position 32 (T32) is a Phosphothreonine. Residues 33-41 and K56 contribute to the ATP site; that span reads LGVGTFGKV. The active-site Proton acceptor is D150. T183 carries the post-translational modification Phosphothreonine; by LKB1 and CaMKK2. Residues 302–381 are AIS; it reads EALKEVCEKF…PERVPFLVAE (80 aa). T355 carries the post-translational modification Phosphothreonine. S356 carries the phosphoserine modification. S360 carries the post-translational modification Phosphoserine; by ULK1. Residue T368 is modified to Phosphothreonine; by ULK1. T382 is modified (phosphothreonine). At S397 the chain carries Phosphoserine; by ULK1. 2 positions are modified to phosphoserine: S467 and S486. Over residues 485–505 the composition is skewed to polar residues; the sequence is KSGTATPQRSGSISNYRSCQR. Residues 485-536 are disordered; the sequence is KSGTATPQRSGSISNYRSCQRSDSDAEAQGKPSDVSLTSSVTSLDSSPVDVA. A Phosphothreonine; by ULK1 modification is found at T488. At T490 the chain carries Phosphothreonine. Phosphoserine is present on residues S496, S508, S524, and S527. Positions 516–535 are enriched in low complexity; the sequence is PSDVSLTSSVTSLDSSPVDV.

It belongs to the protein kinase superfamily. CAMK Ser/Thr protein kinase family. SNF1 subfamily. As to quaternary structure, AMPK is a heterotrimer of an alpha catalytic subunit (PRKAA1 or PRKAA2), a beta (PRKAB1 or PRKAB2) and a gamma non-catalytic subunits (PRKAG1, PRKAG2 or PRKAG3). Interacts with FNIP1 and FNIP2. It depends on Mg(2+) as a cofactor. Post-translationally, phosphorylated at Thr-183 by STK11/LKB1 in complex with STE20-related adapter-alpha (STRADA) pseudo kinase and CAB39. Also phosphorylated at Thr-183 by CAMKK2; triggered by a rise in intracellular calcium ions, without detectable changes in the AMP/ATP ratio. CAMKK1 can also phosphorylate Thr-183, but at a much lower level. Dephosphorylated by protein phosphatase 2A and 2C (PP2A and PP2C). Phosphorylated by ULK1 and ULK2; leading to negatively regulate AMPK activity and suggesting the existence of a regulatory feedback loop between ULK1, ULK2 and AMPK. Dephosphorylated by PPM1A and PPM1B. Ubiquitinated. In terms of processing, glycosylated; O-GlcNAcylated by OGT, promoting the AMP-activated protein kinase (AMPK) activity.

The protein resides in the cytoplasm. It is found in the nucleus. The enzyme catalyses L-seryl-[protein] + ATP = O-phospho-L-seryl-[protein] + ADP + H(+). The catalysed reaction is L-threonyl-[protein] + ATP = O-phospho-L-threonyl-[protein] + ADP + H(+). It catalyses the reaction L-seryl-[acetyl-CoA carboxylase] + ATP = O-phospho-L-seryl-[acetyl-CoA carboxylase] + ADP + H(+). It carries out the reaction L-seryl-[3-hydroxy-3-methylglutaryl-coenzyme A reductase] + ATP = O-phospho-L-seryl-[3-hydroxy-3-methylglutaryl-coenzyme A reductase] + ADP + H(+). The enzyme catalyses L-seryl-[tau protein] + ATP = O-phospho-L-seryl-[tau protein] + ADP + H(+). The catalysed reaction is L-threonyl-[tau protein] + ATP = O-phospho-L-threonyl-[tau protein] + ADP + H(+). Its activity is regulated as follows. Activated by phosphorylation on Thr-183. Binding of AMP to non-catalytic gamma subunit (PRKAG1, PRKAG2 or PRKAG3) results in allosteric activation, inducing phosphorylation on Thr-183. AMP-binding to gamma subunit also sustains activity by preventing dephosphorylation of Thr-183. ADP also stimulates Thr-183 phosphorylation, without stimulating already phosphorylated AMPK. ATP promotes dephosphorylation of Thr-183, rendering the enzyme inactive. Under physiological conditions AMPK mainly exists in its inactive form in complex with ATP, which is much more abundant than AMP. Selectively inhibited by compound C (6-[4-(2-Piperidin-1-yl-ethoxy)-phenyl)]-3-pyridin-4-yl-pyyrazolo[1,5-a] pyrimidine. Activated by resveratrol, a natural polyphenol present in red wine, and S17834, a synthetic polyphenol. Functionally, catalytic subunit of AMP-activated protein kinase (AMPK), an energy sensor protein kinase that plays a key role in regulating cellular energy metabolism. In response to reduction of intracellular ATP levels, AMPK activates energy-producing pathways and inhibits energy-consuming processes: inhibits protein, carbohydrate and lipid biosynthesis, as well as cell growth and proliferation. AMPK acts via direct phosphorylation of metabolic enzymes, and by longer-term effects via phosphorylation of transcription regulators. Regulates lipid synthesis by phosphorylating and inactivating lipid metabolic enzymes such as ACACA, ACACB, GYS1, HMGCR and LIPE; regulates fatty acid and cholesterol synthesis by phosphorylating acetyl-CoA carboxylase (ACACA and ACACB) and hormone-sensitive lipase (LIPE) enzymes, respectively. Promotes lipolysis of lipid droplets by mediating phosphorylation of isoform 1 of CHKA (CHKalpha2). Regulates insulin-signaling and glycolysis by phosphorylating IRS1, PFKFB2 and PFKFB3. AMPK stimulates glucose uptake in muscle by increasing the translocation of the glucose transporter SLC2A4/GLUT4 to the plasma membrane, possibly by mediating phosphorylation of TBC1D4/AS160. Regulates transcription and chromatin structure by phosphorylating transcription regulators involved in energy metabolism such as CRTC2/TORC2, FOXO3, histone H2B, HDAC5, MEF2C, MLXIPL/ChREBP, EP300, HNF4A, p53/TP53, SREBF1, SREBF2 and PPARGC1A. Acts as a key regulator of glucose homeostasis in liver by phosphorylating CRTC2/TORC2, leading to CRTC2/TORC2 sequestration in the cytoplasm. In response to stress, phosphorylates 'Ser-36' of histone H2B (H2BS36ph), leading to promote transcription. Acts as a key regulator of cell growth and proliferation by phosphorylating FNIP1, TSC2, RPTOR, WDR24 and ATG1/ULK1: in response to nutrient limitation, negatively regulates the mTORC1 complex by phosphorylating RPTOR component of the mTORC1 complex and by phosphorylating and activating TSC2. Also phosphorylates and inhibits GATOR2 subunit WDR24 in response to nutrient limitation, leading to suppress glucose-mediated mTORC1 activation. In response to energetic stress, phosphorylates FNIP1, inactivating the non-canonical mTORC1 signaling, thereby promoting nuclear translocation of TFEB and TFE3, and inducing transcription of lysosomal or autophagy genes. In response to nutrient limitation, promotes autophagy by phosphorylating and activating ATG1/ULK1. In that process, it also activates WDR45/WIPI4. Phosphorylates CASP6, thereby preventing its autoprocessing and subsequent activation. In response to nutrient limitation, phosphorylates transcription factor FOXO3 promoting FOXO3 mitochondrial import. Also acts as a regulator of cellular polarity by remodeling the actin cytoskeleton; probably by indirectly activating myosin. AMPK also acts as a regulator of circadian rhythm by mediating phosphorylation of CRY1, leading to destabilize it. May regulate the Wnt signaling pathway by phosphorylating CTNNB1, leading to stabilize it. Also has tau-protein kinase activity: in response to amyloid beta A4 protein (APP) exposure, activated by CAMKK2, leading to phosphorylation of MAPT/TAU; however the relevance of such data remains unclear in vivo. Also phosphorylates CFTR, EEF2K, KLC1, NOS3 and SLC12A1. Regulates hepatic lipogenesis. Activated via SIRT3, represses sterol regulatory element-binding protein (SREBP) transcriptional activities and ATP-consuming lipogenesis to restore cellular energy balance. Upon stress, regulates mitochondrial fragmentation through phosphorylation of MTFR1L. This chain is 5'-AMP-activated protein kinase catalytic subunit alpha-1 (Prkaa1), found in Mus musculus (Mouse).